Consider the following 1036-residue polypeptide: uncharacterized protein (1036 aa).

Positions 1 to 24 (MKRVGLIGVIMAALLVISATPVMA) are cleaved as a signal peptide. A helical transmembrane segment spans residues 1011–1033 (GGGVPGFEAVFAIAGLLAVAYLL).

The protein resides in the membrane. This is an uncharacterized protein from Archaeoglobus fulgidus (strain ATCC 49558 / DSM 4304 / JCM 9628 / NBRC 100126 / VC-16).